Here is a 296-residue protein sequence, read N- to C-terminus: Myeloid differentiation primary response protein MyD88 (296 aa).

The Death domain occupies 54-109; it reads MGFEYLEIRELETRPDPTRSLLDAWQGRSGASVGRLLELLALLDREDILKELKSRI. The interval 110–155 is intermediate domain; sequence EEDCQKYLGKQQNQESEKPLQVARVESSVPQTKELGGITTLDDPLG. In terms of domain architecture, TIR spans 159-293; it reads ELFDAFICYC…WFWTRLAKAL (135 aa). Position 244 is a phosphoserine (Ser244).

Homodimer. Also forms heterodimers with TIRAP. Binds to TLR2, TLR4, IRAK1, IRAK2 and IRAK4 via their respective TIR domains. Interacts with IL18R1. Interacts with BMX, IL1RL1, IKBKE and IRF7. Interacts with LRRFIP1 and LRRFIP2; this interaction positively regulates Toll-like receptor (TLR) signaling in response to agonist. Interacts with FLII. LRRFIP1 and LRRFIP2 compete with FLII for MYD88-binding. Interacts with IRF1. Upon IL1B treatment, forms a complex with PELI1, IRAK1, IRAK4 and TRAF6; this complex recruits MAP3K7/TAK1, TAB1 and TAB2 to mediate NF-kappa-B activation. Direct binding of SMAD6 to PELI1 prevents the complex formation and hence negatively regulates IL1R-TLR signaling and eventually NF-kappa-B-mediated gene expression. May interact with PIK3AP1. Interacts (via TIR domain) with DHX9 (via H2A and OB-fold regions); this interaction is direct. Interacts with OTUD4 deubiquitinase; the interaction is direct. In terms of processing, ubiquitinated; undergoes 'Lys-63'-linked polyubiquitination. OTUD4 specifically hydrolyzes 'Lys-63'-linked polyubiquitinated MYD88. Deubiquitinated by USP3 that cleaves 'Lys-63'-linked ubiquitin chains leading to inhibition of MYD88-induced NF-kappa-B signaling. In terms of tissue distribution, detected in bone marrow. Isoform 1 is expressed in testis, kidney, lung, ovary, adrenal gland, provstate, thymus and heart, and weakly in skeletal muscle, liver, spleen and brain. Isoform 2 is mainly expressed in the spleen and weakly in brain.

The protein resides in the cytoplasm. It is found in the nucleus. Adapter protein involved in the Toll-like receptor and IL-1 receptor signaling pathway in the innate immune response. Acts via IRAK1, IRAK2, IRF7 and TRAF6, leading to NF-kappa-B activation, cytokine secretion and the inflammatory response. Increases IL-8 transcription. Involved in IL-18-mediated signaling pathway. Activates IRF1 resulting in its rapid migration into the nucleus to mediate an efficient induction of IFN-beta, NOS2/INOS, and IL12A genes. Upon TLR8 activation by GU-rich single-stranded RNA (GU-rich RNA) derived from viruses, induces IL1B release through NLRP3 inflammasome activation. MyD88-mediated signaling in intestinal epithelial cells is crucial for maintenance of gut homeostasis and controls the expression of the antimicrobial lectin REG3G in the small intestine. Mediates leukocyte recruitment at the inflammatory site. In terms of biological role, defective in its ability to induce IRAK phosphorylation and NF-kappa-B activation and can function as a negative regulator of activation by IL-1 or lipopolysaccharide (LPS). This chain is Myeloid differentiation primary response protein MyD88, found in Mus musculus (Mouse).